The chain runs to 729 residues: Catalase-peroxidase (729 aa).

A disordered region spans residues 1–26 (MTMDQKTDNAGKCPVAHTAPRGRSNR). The tryptophyl-tyrosyl-methioninium (Trp-Tyr) (with M-245) cross-link spans 97 to 219 (WHSAGTYRIT…LAAVQMGLIY (123 aa)). His-98 serves as the catalytic Proton acceptor. The tryptophyl-tyrosyl-methioninium (Tyr-Met) (with W-97) cross-link spans 219–245 (YVNPEGPNGNPDPVAAAHDIRETFARM). His-260 is a heme b binding site.

It belongs to the peroxidase family. Peroxidase/catalase subfamily. Homodimer or homotetramer. Requires heme b as cofactor. Post-translationally, formation of the three residue Trp-Tyr-Met cross-link is important for the catalase, but not the peroxidase activity of the enzyme.

The enzyme catalyses H2O2 + AH2 = A + 2 H2O. It carries out the reaction 2 H2O2 = O2 + 2 H2O. Bifunctional enzyme with both catalase and broad-spectrum peroxidase activity. This is Catalase-peroxidase from Sinorhizobium medicae (strain WSM419) (Ensifer medicae).